The following is a 142-amino-acid chain: Putative pre-16S rRNA nuclease (142 aa).

Belongs to the YqgF nuclease family.

The protein localises to the cytoplasm. Could be a nuclease involved in processing of the 5'-end of pre-16S rRNA. This Lactobacillus delbrueckii subsp. bulgaricus (strain ATCC BAA-365 / Lb-18) protein is Putative pre-16S rRNA nuclease.